Consider the following 217-residue polypeptide: GTP cyclohydrolase 1 (217 aa).

Zn(2+)-binding residues include Cys-109, His-112, and Cys-180.

Belongs to the GTP cyclohydrolase I family. In terms of assembly, toroid-shaped homodecamer, composed of two pentamers of five dimers.

It catalyses the reaction GTP + H2O = 7,8-dihydroneopterin 3'-triphosphate + formate + H(+). Its pathway is cofactor biosynthesis; 7,8-dihydroneopterin triphosphate biosynthesis; 7,8-dihydroneopterin triphosphate from GTP: step 1/1. The sequence is that of GTP cyclohydrolase 1 from Photobacterium profundum (strain SS9).